The primary structure comprises 536 residues: SNW domain-containing protein 1 (536 aa).

Residues 1-46 form a disordered region; it reads MALTSFLPAPTQLSQDQLEAEEKARSQRSRQTSLVSSRREPPPYGY. An N-acetylalanine modification is found at Ala-2. Ser-14 carries the phosphoserine modification. Residue Lys-23 forms a Glycyl lysine isopeptide (Lys-Gly) (interchain with G-Cter in SUMO2) linkage. The tract at residues 59 to 79 is interaction with PPIL1; it reads GDGGAFPEIHVAQYPLDMGRK. Glycyl lysine isopeptide (Lys-Gly) (interchain with G-Cter in SUMO2) cross-links involve residues Lys-81, Lys-97, Lys-115, Lys-122, Lys-141, Lys-158, and Lys-170. Residues 174–339 form an SNW region; that stretch reads AQYIRYTPSQ…KARERRAGIK (166 aa). 2 positions are modified to phosphoserine: Ser-182 and Ser-190. Lys-193 participates in a covalent cross-link: Glycyl lysine isopeptide (Lys-Gly) (interchain with G-Cter in SUMO2). The interval 209–234 is disordered; it reads PPRFKINKKIPRGPPSPPAPVMHSPS. A phosphoserine mark is found at Ser-224, Ser-232, and Ser-234. Residues Lys-240, Lys-258, Lys-286, Lys-339, Lys-344, Lys-416, and Lys-441 each participate in a glycyl lysine isopeptide (Lys-Gly) (interchain with G-Cter in SUMO2) cross-link. Residues 311 to 386 are disordered; that stretch reads KMAQKEKEKH…RSKLQRNENR (76 aa). Residue Ser-446 is modified to Phosphoserine. Lys-452 is covalently cross-linked (Glycyl lysine isopeptide (Lys-Gly) (interchain with G-Cter in SUMO2)). Composition is skewed to basic and acidic residues over residues 469–489 and 503–530; these read TNRF…RGRE and KFLE…EHEG. The interval 469 to 536 is disordered; it reads TNRFVPDKEF…EHEGKKRRKE (68 aa). Phosphoserine is present on residues Ser-479 and Ser-481. Lys-509 participates in a covalent cross-link: Glycyl lysine isopeptide (Lys-Gly) (interchain with G-Cter in SUMO2).

This sequence belongs to the SNW family. Identified in the spliceosome C complex. Associates with U4/U6-U5 tri-small nuclear ribonucleoproteins (U4/U6-U5 tri-snRNPs). Component of the minor spliceosome, which splices U12-type introns. Interacts with SKI, SMAD2,SMAD3, RBPJ, RB1, PABPN1, MAGEA1, SIRT1, FOXN3, U2AF2, PPIL1, DAXX and ATP1B4. Interacts with VDR and RXRA; preferentially associates with VDR:RXRA heterodimers. Interacts with NCOR2. Interacts with MAML1. Interacts with NOTCH1 NICD; the interaction involves multimerized NOTCH1 NICD. Forms a complex with NOTCH1 NICD and MAML1; the association is dissociated by RBPJ. Associates with positive transcription elongation factor b (P-TEFb). Component of the SNARP complex which consists at least of SNIP1, SNW1, THRAP3, BCLAF1 and PNN.

It localises to the nucleus. Functionally, involved in pre-mRNA splicing as component of the spliceosome. As a component of the minor spliceosome, involved in the splicing of U12-type introns in pre-mRNAs. Required in the specific splicing of CDKN1A pre-mRNA; the function probably involves the recruitment of U2AF2 to the mRNA. May recruit PPIL1 to the spliceosome. May be involved in cyclin-D1/CCND1 mRNA stability through the SNARP complex which associates with both the 3'end of the CCND1 gene and its mRNA. Involved in transcriptional regulation. Modulates TGF-beta-mediated transcription via association with SMAD proteins, MYOD1-mediated transcription via association with PABPN1, RB1-mediated transcriptional repression, and retinoid-X receptor (RXR)- and vitamin D receptor (VDR)-dependent gene transcription in a cell line-specific manner probably involving coactivators NCOA1 and GRIP1. Is involved in NOTCH1-mediated transcriptional activation. Binds to multimerized forms of Notch intracellular domain (NICD) and is proposed to recruit transcriptional coactivators such as MAML1 to form an intermediate preactivation complex which associates with DNA-bound CBF-1/RBPJ to form a transcriptional activation complex by releasing SNW1 and redundant NOTCH1 NICD. This Pongo abelii (Sumatran orangutan) protein is SNW domain-containing protein 1 (SNW1).